We begin with the raw amino-acid sequence, 153 residues long: NADH dehydrogenase [ubiquinone] 1 beta subcomplex subunit 11, mitochondrial (153 aa).

The transit peptide at 1–29 (MAAGLFGLSARRLLAAAATRGLPAARVRW) directs the protein to the mitochondrion. Positions 40 to 76 (PSAVAGKRPPEPTTPWQEDPEPEDENLYEKNPDSHGY) are disordered. Over residues 66–76 (LYEKNPDSHGY) the composition is skewed to basic and acidic residues. A helical membrane pass occupies residues 89–109 (LVFFFGVSIILVLGSTFVAYL).

The protein belongs to the complex I NDUFB11 subunit family. In terms of assembly, complex I is composed of 45 different subunits. Interacts with BCAP31. As to expression, ubiquitous.

The protein localises to the mitochondrion inner membrane. Functionally, accessory subunit of the mitochondrial membrane respiratory chain NADH dehydrogenase (Complex I), that is believed not to be involved in catalysis. Complex I functions in the transfer of electrons from NADH to the respiratory chain. The immediate electron acceptor for the enzyme is believed to be ubiquinone. The protein is NADH dehydrogenase [ubiquinone] 1 beta subcomplex subunit 11, mitochondrial (NDUFB11) of Homo sapiens (Human).